A 287-amino-acid chain; its full sequence is 4-hydroxybenzoate octaprenyltransferase (287 aa).

6 consecutive transmembrane segments (helical) span residues 41-61, 89-109, 133-153, 158-178, 218-238, and 267-287; these read WPLI…GCAM, WEAV…ILPL, FFAI…PMAF, NTVP…SIAY, LGIY…WVGW, and NNWL…MAGS.

It belongs to the UbiA prenyltransferase family. The cofactor is Mg(2+).

It is found in the cell inner membrane. It catalyses the reaction all-trans-octaprenyl diphosphate + 4-hydroxybenzoate = 4-hydroxy-3-(all-trans-octaprenyl)benzoate + diphosphate. Its pathway is cofactor biosynthesis; ubiquinone biosynthesis. Catalyzes the prenylation of para-hydroxybenzoate (PHB) with an all-trans polyprenyl group. Mediates the second step in the final reaction sequence of ubiquinone-8 (UQ-8) biosynthesis, which is the condensation of the polyisoprenoid side chain with PHB, generating the first membrane-bound Q intermediate 3-octaprenyl-4-hydroxybenzoate. The polypeptide is 4-hydroxybenzoate octaprenyltransferase (Burkholderia multivorans (strain ATCC 17616 / 249)).